The sequence spans 467 residues: Argininosuccinate lyase (467 aa).

It belongs to the lyase 1 family. Argininosuccinate lyase subfamily.

It localises to the cytoplasm. It carries out the reaction 2-(N(omega)-L-arginino)succinate = fumarate + L-arginine. It functions in the pathway amino-acid biosynthesis; L-arginine biosynthesis; L-arginine from L-ornithine and carbamoyl phosphate: step 3/3. This chain is Argininosuccinate lyase, found in Chromohalobacter salexigens (strain ATCC BAA-138 / DSM 3043 / CIP 106854 / NCIMB 13768 / 1H11).